The primary structure comprises 157 residues: Protein Smg homolog (157 aa).

This sequence belongs to the Smg family.

The polypeptide is Protein Smg homolog (Pseudoalteromonas translucida (strain TAC 125)).